Here is a 325-residue protein sequence, read N- to C-terminus: Putative aryl-alcohol dehydrogenase C750.01 (325 aa).

This sequence belongs to the aldo/keto reductase family. Aldo/keto reductase 2 subfamily.

The sequence is that of Putative aryl-alcohol dehydrogenase C750.01 from Schizosaccharomyces pombe (strain 972 / ATCC 24843) (Fission yeast).